We begin with the raw amino-acid sequence, 242 residues long: ATP synthase subunit a (242 aa).

6 consecutive transmembrane segments (helical) span residues 29-49 (SSIYMLLATTLSLTYLYLAFY), 84-104 (FIPLVFSLFIFILFCNLLGMT), 114-134 (IIVTFTLALLIFLTVTIVGFI), 140-160 (FLTLFLPHGTPVWLAPLMIVI), 189-209 (VIASFTVSLMIYLKFLPIPLM), and 210-230 (VILIGFEIFIAILQAYIFTIL).

Belongs to the ATPase A chain family. In terms of assembly, F-type ATPases have 2 components, CF(1) - the catalytic core - and CF(0) - the membrane proton channel. CF(1) has five subunits: alpha(3), beta(3), gamma(1), delta(1), epsilon(1). CF(0) has three main subunits: a(1), b(2) and c(9-12). The alpha and beta chains form an alternating ring which encloses part of the gamma chain. CF(1) is attached to CF(0) by a central stalk formed by the gamma and epsilon chains, while a peripheral stalk is formed by the delta and b chains.

The protein resides in the cell inner membrane. In terms of biological role, key component of the proton channel; it plays a direct role in the translocation of protons across the membrane. This Rickettsia prowazekii (strain Madrid E) protein is ATP synthase subunit a.